A 301-amino-acid chain; its full sequence is Probable alpha-L-glutamate ligase (301 aa).

Positions 104–287 (LQLLSRKGIG…VAGMIYEFIE (184 aa)) constitute an ATP-grasp domain. Residues Lys-141, 178–179 (EF), Asp-187, and 211–213 (RSN) each bind ATP. Mg(2+)-binding residues include Asp-248, Glu-260, and Asn-262. 3 residues coordinate Mn(2+): Asp-248, Glu-260, and Asn-262.

Belongs to the RimK family. It depends on Mg(2+) as a cofactor. The cofactor is Mn(2+).

The protein is Probable alpha-L-glutamate ligase of Vibrio vulnificus (strain CMCP6).